A 248-amino-acid polypeptide reads, in one-letter code: uncharacterized protein (248 aa).

To M.jannaschii MJ1452.

This is an uncharacterized protein from Methanothermobacter thermautotrophicus (strain ATCC 29096 / DSM 1053 / JCM 10044 / NBRC 100330 / Delta H) (Methanobacterium thermoautotrophicum).